A 448-amino-acid polypeptide reads, in one-letter code: Phosphoglucosamine mutase (448 aa).

Residue Ser-100 is the Phosphoserine intermediate of the active site. 4 residues coordinate Mg(2+): Ser-100, Asp-240, Asp-242, and Asp-244. Ser-100 carries the phosphoserine modification.

The protein belongs to the phosphohexose mutase family. It depends on Mg(2+) as a cofactor. Activated by phosphorylation.

The catalysed reaction is alpha-D-glucosamine 1-phosphate = D-glucosamine 6-phosphate. In terms of biological role, catalyzes the conversion of glucosamine-6-phosphate to glucosamine-1-phosphate. This Clostridioides difficile (strain 630) (Peptoclostridium difficile) protein is Phosphoglucosamine mutase.